We begin with the raw amino-acid sequence, 262 residues long: Ribose-5-phosphate isomerase A (262 aa).

Substrate-binding positions include 33–36, 89–92, and 102–105; these read TGST, DGAD, and KGGG. The active-site Proton acceptor is the Glu111. Lys129 contacts substrate.

This sequence belongs to the ribose 5-phosphate isomerase family. As to quaternary structure, homodimer.

The catalysed reaction is aldehydo-D-ribose 5-phosphate = D-ribulose 5-phosphate. It functions in the pathway carbohydrate degradation; pentose phosphate pathway; D-ribose 5-phosphate from D-ribulose 5-phosphate (non-oxidative stage): step 1/1. In terms of biological role, catalyzes the reversible conversion of ribose-5-phosphate to ribulose 5-phosphate. The chain is Ribose-5-phosphate isomerase A from Ruegeria sp. (strain TM1040) (Silicibacter sp.).